We begin with the raw amino-acid sequence, 285 residues long: Ribosomal protein L11 methyltransferase (285 aa).

4 residues coordinate S-adenosyl-L-methionine: threonine 131, glycine 154, aspartate 176, and asparagine 223.

The protein belongs to the methyltransferase superfamily. PrmA family.

Its subcellular location is the cytoplasm. It catalyses the reaction L-lysyl-[protein] + 3 S-adenosyl-L-methionine = N(6),N(6),N(6)-trimethyl-L-lysyl-[protein] + 3 S-adenosyl-L-homocysteine + 3 H(+). Its function is as follows. Methylates ribosomal protein L11. In Brucella suis (strain ATCC 23445 / NCTC 10510), this protein is Ribosomal protein L11 methyltransferase.